Here is a 331-residue protein sequence, read N- to C-terminus: Meiotic recombination protein W68 (331 aa).

The region spanning 1–120 is the Topo IIA-type catalytic domain; it reads MDEFSENIER…LGILAASKGL (120 aa). Y81 acts as the O-(5'-phospho-DNA)-tyrosine intermediate in catalysis. Positions 167 and 221 each coordinate Mg(2+).

It belongs to the TOP6A family. Mg(2+) is required as a cofactor.

The protein localises to the nucleus. The enzyme catalyses ATP-dependent breakage, passage and rejoining of double-stranded DNA.. Its function is as follows. Required for meiotic recombination. Together with mei-P22, mediates DNA cleavage that forms the double-strand breaks (DSB) that initiate meiotic recombination. This is Meiotic recombination protein W68 from Drosophila melanogaster (Fruit fly).